Here is a 317-residue protein sequence, read N- to C-terminus: Transaldolase (317 aa).

Catalysis depends on Lys132, which acts as the Schiff-base intermediate with substrate.

This sequence belongs to the transaldolase family. Type 1 subfamily. In terms of assembly, homodimer.

The protein localises to the cytoplasm. It carries out the reaction D-sedoheptulose 7-phosphate + D-glyceraldehyde 3-phosphate = D-erythrose 4-phosphate + beta-D-fructose 6-phosphate. It participates in carbohydrate degradation; pentose phosphate pathway; D-glyceraldehyde 3-phosphate and beta-D-fructose 6-phosphate from D-ribose 5-phosphate and D-xylulose 5-phosphate (non-oxidative stage): step 2/3. Transaldolase is important for the balance of metabolites in the pentose-phosphate pathway. This is Transaldolase from Yersinia pseudotuberculosis serotype O:1b (strain IP 31758).